Here is a 371-residue protein sequence, read N- to C-terminus: MKQKILLCSDLDRTLLPNGHQAESPQARLRLQRLAQRPGIILAYVSGRHKALIQSAIREYDLPLPDFAIGDVGTTIYQITDNQWHPWEDWSKEISQDWQGINQAGLAKLFADITPLRLQEPEKQNRYKLSYYAPPELDWENLIPQLAQRLQAQGIQASFIWSVDETAQIGLLDILPKRANKLHAIRFLMERQHFDKSHTVFAGDSGNDLEVLASGLQAILVRNAQEEVRQEALRRLPPEHSQQLYLARGGFMGLNGYYSAGVLEGLAHFFPETRAWMETGREESAEEETAQSCAIYRSCKRNDSYLYVESQDDFSRVPGKLLEMLGKLEFVMRLELRPEISLAQANTREVMQMLREKGYFLQLSSREYRRS.

Positions methionine 1–glutamate 288 are HAD-like hydrolase. In terms of domain architecture, YcgL spans glutamine 291–serine 371.

In the N-terminal section; belongs to the HAD-like hydrolase superfamily.

This is Putative HAD-like hydrolase Noc_2718 from Nitrosococcus oceani (strain ATCC 19707 / BCRC 17464 / JCM 30415 / NCIMB 11848 / C-107).